The following is an 89-amino-acid chain: CRISPR-associated endoribonuclease Cas2 2 (89 aa).

Aspartate 9 lines the Mg(2+) pocket.

The protein belongs to the CRISPR-associated endoribonuclease Cas2 protein family. Homodimer, forms a heterotetramer with a Cas1 homodimer. The cofactor is Mg(2+).

CRISPR (clustered regularly interspaced short palindromic repeat), is an adaptive immune system that provides protection against mobile genetic elements (viruses, transposable elements and conjugative plasmids). CRISPR clusters contain sequences complementary to antecedent mobile elements and target invading nucleic acids. CRISPR clusters are transcribed and processed into CRISPR RNA (crRNA). Functions as a ssRNA-specific endoribonuclease. Involved in the integration of spacer DNA into the CRISPR cassette. The polypeptide is CRISPR-associated endoribonuclease Cas2 2 (Methanospirillum hungatei JF-1 (strain ATCC 27890 / DSM 864 / NBRC 100397 / JF-1)).